Reading from the N-terminus, the 2335-residue chain is Pre-mRNA-processing-splicing factor 8 (2335 aa).

N-acetylalanine is present on Ala2. The reverse transcriptase homology domain stretch occupies residues 812 to 1303 (TTVHWLESRR…KIQTRIKIGL (492 aa)). 2 positions are modified to phosphoserine: Ser859 and Ser1358. Residues 1304–1577 (NSKMPSRFPP…TLKISLIQIF (274 aa)) are linker. Residue Lys1425 is modified to N6,N6-dimethyllysine. Lys1463 bears the N6-acetyllysine mark. The important for branch point selection stretch occupies residues 1513–1526 (MKWKKLTNAQRSGL). A restriction endonuclease homology domain region spans residues 1581 to 1752 (LWQKIHESIV…LRERIRKGLQ (172 aa)). The segment at 1669 to 2034 (GDYDSHDIER…QIAEIEKQTK (366 aa)) is involved in interaction with pre-mRNA 5' splice site. Residues 1767-2020 (NYGELFSNQI…ILGMEISAPS (254 aa)) are RNase H homology domain. In terms of domain architecture, MPN spans 2103 to 2234 (TYILPKNVLK…LTAYKLTPSG (132 aa)). A required for interaction with EFTUD2 and SNRNP200 region spans residues 2301–2335 (PKEFYHEVHRPSHFLNFALLQEGEVYSADREDLYA).

In terms of assembly, part of the U5 snRNP complex. Component of the U4/U6-U5 tri-snRNP complex composed of the U4, U6 and U5 snRNAs and at least PRPF3, PRPF4, PRPF6, PRPF8, PRPF31, SNRNP200, TXNL4A, SNRNP40, DDX23, CD2BP2, PPIH, SNU13, EFTUD2, SART1 and USP39. Component of the U5.U4atac/U6atac snRNP complexes in U12-dependent spliceosomes. Within the minor spliceosome, which acts on U12-type introns, interacts with PPIL2 and RBM48. Core component of U2-type precatalytic, catalytic and postcatalytic spliceosomal complexes. Found in a mRNA splicing-dependent exon junction complex (EJC) with SRRM1. Interacts with U5 snRNP proteins SNRP116 and SNRNP40. Interacts with EFTUD2. Interacts (via the MPN (JAB/Mov34) domain) with PRPF3 ('Lys-63'-linked polyubiquitinated); may stabilize the U4/U6-U5 tri-snRNP complex. Interacts (via RNase H homology domain) with AAR2. Interacts with RPAP3 and URI1 in a ZNHIT2-dependent manner. Interacts with C9orf78. Interacts with SNRNP200; the interaction is direct. Interacts with TSSC4; the interaction is direct. As to expression, widely expressed.

The protein resides in the nucleus. It is found in the nucleus speckle. Its function is as follows. Plays a role in pre-mRNA splicing as core component of precatalytic, catalytic and postcatalytic spliceosomal complexes, both of the predominant U2-type spliceosome and the minor U12-type spliceosome. Functions as a scaffold that mediates the ordered assembly of spliceosomal proteins and snRNAs. Required for the assembly of the U4/U6-U5 tri-snRNP complex, a building block of the spliceosome. Functions as a scaffold that positions spliceosomal U2, U5 and U6 snRNAs at splice sites on pre-mRNA substrates, so that splicing can occur. Interacts with both the 5' and the 3' splice site. This is Pre-mRNA-processing-splicing factor 8 (PRPF8) from Homo sapiens (Human).